The sequence spans 1151 residues: Calcium-activated potassium channel subunit alpha-1 (1151 aa).

Residues 1–36 (MSSNIHANHLSLDASSSSSSSSSSSSSSSSSSSVHE) form a disordered region. The Extracellular portion of the chain corresponds to 1-59 (MSSNIHANHLSLDASSSSSSSSSSSSSSSSSSSVHEPKMDALIIPVTMEVPCDSRGQRM). A compositionally biased stretch (low complexity) spans 15-33 (SSSSSSSSSSSSSSSSSSS). The chain crosses the membrane as a helical span at residues 60-80 (WWAFLASSMVTFFGGLFIILL). Topologically, residues 81 to 151 (WRTLKYLWTV…MISAQTLTGR (71 aa)) are cytoplasmic. S-palmitoyl cysteine attachment occurs at residues C91, C92, and C94. Residues 152 to 172 (VLVVLVFALSIGALVIYFIDS) traverse the membrane as a helical segment. Residues 173–187 (SNPIESCQNFYKDFT) lie on the Extracellular side of the membrane. A helical transmembrane segment spans residues 188–208 (LQIDMAFNVFFLLYFGLRFIA). Residues 209–212 (ANDK) lie on the Cytoplasmic side of the membrane. Residues 213–233 (LWFWLEVNSVVDFFTVPPVFV) form a helical membrane-spanning segment. The Extracellular segment spans residues 234–237 (SVYL). A helical; Voltage-sensor membrane pass occupies residues 238-258 (NRSWLGLRFLRALRLIQFSEI). Topologically, residues 259-273 (LQFLNILKTSNSIKL) are cytoplasmic. Residues 274–294 (VNLLSIFISTWLTAAGFIHLV) form a helical membrane-spanning segment. At 295–308 (ENSGDPWENFQNNQ) the chain is on the extracellular side. Positions 309–331 (ALTYWECVYLLMVTMSTVGYGDV) form an intramembrane region, pore-forming. A Selectivity for potassium motif is present at residues 325–328 (TVGY). Residues 332–340 (YAKTTLGRL) are Extracellular-facing. Residues 341–361 (FMVFFILGGLAMFASYVPEII) traverse the membrane as a helical segment. Topologically, residues 362-1151 (ELIGNRKKYG…KQKYVQEERL (790 aa)) are cytoplasmic. In terms of domain architecture, RCK N-terminal 1 spans 380–522 (RKHIVVCGHI…WNWKEGDDAI (143 aa)). Residues E412, Q435, and E437 each contribute to the Mg(2+) site. The segment S7 stretch occupies residues 529 to 549 (LGFIAQSCLAQGLSTMLANLF). The segment at 586 to 606 (LSFPTVCELCFVKLKLLMIAI) is segment S8. The interval 650 to 654 (CKACH) is heme-binding motif. The interval 674–702 (EQPSTLSPKKKQRNGGMRNSPNSSPKLMR) is disordered. Residue T678 is modified to Phosphothreonine. A phosphoserine mark is found at S680, S693, and S697. A segment S9 region spans residues 752-772 (VLSGHVVVCIFGDVSSALIGL). Positions 754-898 (SGHVVVCIFG…MDRSSPDNSP (145 aa)) constitute an RCK N-terminal 2 domain. Phosphothreonine is present on T885. Residues S893 and S897 each carry the phosphoserine modification. A Calcium bowl motif is present at residues 918-940 (TELVNDTNVQFLDQDDDDDPDTE). Q927, D930, D933, and D935 together coordinate Ca(2+). The interval 947-967 (FACGTAFAVSVLDSLMSATYF) is segment S10. The span at 1101–1126 (RASLSHSSHSSQSSSKKSSSVHSIPS) shows a compositional bias: low complexity. Positions 1101–1151 (RASLSHSSHSSQSSSKKSSSVHSIPSTANRQNRPKSRESRDKQKYVQEERL) are disordered. Residues 1135–1151 (KSRESRDKQKYVQEERL) show a composition bias toward basic and acidic residues. A phosphoserine mark is found at S1136 and S1139.

Belongs to the potassium channel family. Calcium-activated (TC 1.A.1.3) subfamily. KCa1.1/KCNMA1 sub-subfamily. Homotetramer; which constitutes the calcium-activated potassium channel. Interacts with beta subunits KCNMB1, KCNMB2, KCNMB3 and KCNMB4. Interacts with gamma subunits LRRC26, LRRC38, LRRC52 and LRRC55. Beta and gamma subunits are accessory, and modulate its activity. Interacts with RAB11B. Post-translationally, phosphorylated. Phosphorylation by kinases such as PKA and/or PKG. In smooth muscles, phosphorylation affects its activity. In terms of processing, palmitoylation by ZDHHC22 and ZDHHC23 within the intracellular linker between the S0 and S1 transmembrane domains regulates localization to the plasma membrane. Depalmitoylated by LYPLA1 and LYPLAL1, leading to retard exit from the trans-Golgi network.

The protein localises to the cell membrane. The enzyme catalyses K(+)(in) = K(+)(out). Ethanol and carbon monoxide-bound heme increase channel activation. Heme inhibits channel activation. Its function is as follows. Potassium channel activated by both membrane depolarization or increase in cytosolic Ca(2+) that mediates export of K(+). It is also activated by the concentration of cytosolic Mg(2+). Its activation dampens the excitatory events that elevate the cytosolic Ca(2+) concentration and/or depolarize the cell membrane. It therefore contributes to repolarization of the membrane potential. Plays a key role in controlling excitability in a number of systems, such as regulation of the contraction of smooth muscle, the tuning of hair cells in the cochlea, regulation of transmitter release, and innate immunity. In smooth muscles, its activation by high level of Ca(2+), caused by ryanodine receptors in the sarcoplasmic reticulum, regulates the membrane potential. In cochlea cells, its number and kinetic properties partly determine the characteristic frequency of each hair cell and thereby helps to establish a tonotopic map. Kinetics of KCNMA1 channels are determined by alternative splicing, phosphorylation status and its combination with modulating beta subunits. Highly sensitive to both iberiotoxin (IbTx) and charybdotoxin (CTX). The chain is Calcium-activated potassium channel subunit alpha-1 (KCNMA1) from Macaca mulatta (Rhesus macaque).